The sequence spans 218 residues: Cell division protein SepF (218 aa).

The tract at residues 24 to 115 (EDVTASTDNV…IANRREQYQQ (92 aa)) is disordered. Over residues 28-43 (ASTDNVIPRSQQSVRA) the composition is skewed to polar residues. Positions 47-63 (PKQEPRNNHVQQDHQAR) are enriched in basic and acidic residues.

Belongs to the SepF family. Homodimer. Interacts with FtsZ.

The protein localises to the cytoplasm. In terms of biological role, cell division protein that is part of the divisome complex and is recruited early to the Z-ring. Probably stimulates Z-ring formation, perhaps through the cross-linking of FtsZ protofilaments. Its function overlaps with FtsA. This is Cell division protein SepF from Streptococcus pyogenes serotype M4 (strain MGAS10750).